The chain runs to 274 residues: Pyridoxal phosphate homeostasis protein (274 aa).

S6 is modified (phosphoserine). K47 is modified (N6-(pyridoxal phosphate)lysine). Y69 carries the post-translational modification Phosphotyrosine. At K125 the chain carries N6-succinyllysine. S226 and S244 each carry phosphoserine.

The protein belongs to the pyridoxal phosphate-binding protein YggS/PROSC family.

Its function is as follows. Pyridoxal 5'-phosphate (PLP)-binding protein, which may be involved in intracellular homeostatic regulation of pyridoxal 5'-phosphate (PLP), the active form of vitamin B6. This chain is Pyridoxal phosphate homeostasis protein, found in Mus musculus (Mouse).